The primary structure comprises 564 residues: Phosphomethylpyrimidine synthase (564 aa).

Substrate is bound by residues N203, M232, Y261, H297, 317–319, 358–361, and E397; these read SRG and DGLR. H401 lines the Zn(2+) pocket. Y424 is a substrate binding site. Residue H465 participates in Zn(2+) binding. Residues C541, C544, and C549 each coordinate [4Fe-4S] cluster.

The protein belongs to the ThiC family. [4Fe-4S] cluster serves as cofactor.

The enzyme catalyses 5-amino-1-(5-phospho-beta-D-ribosyl)imidazole + S-adenosyl-L-methionine = 4-amino-2-methyl-5-(phosphooxymethyl)pyrimidine + CO + 5'-deoxyadenosine + formate + L-methionine + 3 H(+). It participates in cofactor biosynthesis; thiamine diphosphate biosynthesis. Its function is as follows. Catalyzes the synthesis of the hydroxymethylpyrimidine phosphate (HMP-P) moiety of thiamine from aminoimidazole ribotide (AIR) in a radical S-adenosyl-L-methionine (SAM)-dependent reaction. This chain is Phosphomethylpyrimidine synthase, found in Bacteroides fragilis (strain ATCC 25285 / DSM 2151 / CCUG 4856 / JCM 11019 / LMG 10263 / NCTC 9343 / Onslow / VPI 2553 / EN-2).